The following is a 1014-amino-acid chain: Isoleucine--tRNA ligase (1014 aa).

The 'HIGH' region motif lies at 48–58 (PTANGRPGIHH). The 'KMSKS' region signature appears at 628 to 632 (KMSKS). Lysine 631 contributes to the ATP binding site.

This sequence belongs to the class-I aminoacyl-tRNA synthetase family. IleS type 2 subfamily. In terms of assembly, monomer. The cofactor is Zn(2+).

The protein resides in the cytoplasm. It catalyses the reaction tRNA(Ile) + L-isoleucine + ATP = L-isoleucyl-tRNA(Ile) + AMP + diphosphate. Its function is as follows. Catalyzes the attachment of isoleucine to tRNA(Ile). As IleRS can inadvertently accommodate and process structurally similar amino acids such as valine, to avoid such errors it has two additional distinct tRNA(Ile)-dependent editing activities. One activity is designated as 'pretransfer' editing and involves the hydrolysis of activated Val-AMP. The other activity is designated 'posttransfer' editing and involves deacylation of mischarged Val-tRNA(Ile). The sequence is that of Isoleucine--tRNA ligase from Dehalococcoides mccartyi (strain CBDB1).